The following is a 311-amino-acid chain: Olfactory receptor 14I1 (311 aa).

The Extracellular portion of the chain corresponds to 1–26 (MDNLTKVTEFLLMEFSGIWELQVLHA). Residue Asn-3 is glycosylated (N-linked (GlcNAc...) asparagine). The helical transmembrane segment at 27 to 47 (GLFLLIYLAVLVGNLLIIAVI) threads the bilayer. Residues 48–55 (TLDQHLHT) lie on the Cytoplasmic side of the membrane. Residues 56–76 (PMYFFLKNLSVLDLCYISVTV) traverse the membrane as a helical segment. At 77-92 (PKSIRNSLTRRSSISY) the chain is on the extracellular side. A helical transmembrane segment spans residues 93-113 (LGCVAQVYFFSAFASAELAFL). A disulfide bond links Cys-95 and Cys-188. Topologically, residues 114-141 (TVMSYDRYVAICHPLQYRAVMTSGGCYQ) are cytoplasmic. Residues 142 to 162 (MAVTTWLSCFSYAAVHTGNMF) traverse the membrane as a helical segment. Residues 163 to 189 (REHVCRSSVIHQFFRDIPHVLALVSCE) lie on the Extracellular side of the membrane. The chain crosses the membrane as a helical span at residues 190–210 (VFFVEFLTLALSSCLVLGCFI). At 211-241 (LMMISYFQIFSTVLRIPSGQSRAKAFSTCSP) the chain is on the cytoplasmic side. Residues 242–262 (QLIVIMLFLTTGLFAALGPIA) form a helical membrane-spanning segment. The Extracellular portion of the chain corresponds to 263–269 (KALSIQD). The chain crosses the membrane as a helical span at residues 270-290 (LVIALTYTVLPPFLNPIIYSL). Topologically, residues 291-311 (RNKEIKTAMWRLFVKIYFLQK) are cytoplasmic.

The protein belongs to the G-protein coupled receptor 1 family.

It localises to the cell membrane. In terms of biological role, odorant receptor. This chain is Olfactory receptor 14I1 (OR14I1), found in Homo sapiens (Human).